The following is a 188-amino-acid chain: Probable chorismate pyruvate-lyase (188 aa).

The substrate site is built by Arg-77, Leu-115, and Glu-174.

The protein belongs to the UbiC family.

Its subcellular location is the cytoplasm. The enzyme catalyses chorismate = 4-hydroxybenzoate + pyruvate. It functions in the pathway cofactor biosynthesis; ubiquinone biosynthesis. Functionally, removes the pyruvyl group from chorismate, with concomitant aromatization of the ring, to provide 4-hydroxybenzoate (4HB) for the ubiquinone pathway. This is Probable chorismate pyruvate-lyase from Shewanella loihica (strain ATCC BAA-1088 / PV-4).